A 119-amino-acid chain; its full sequence is Large ribosomal subunit protein bL20 (119 aa).

It belongs to the bacterial ribosomal protein bL20 family.

In terms of biological role, binds directly to 23S ribosomal RNA and is necessary for the in vitro assembly process of the 50S ribosomal subunit. It is not involved in the protein synthesizing functions of that subunit. In Lactococcus lactis subsp. cremoris (strain MG1363), this protein is Large ribosomal subunit protein bL20.